Consider the following 375-residue polypeptide: o-succinylbenzoate synthase (375 aa).

Lys-166 acts as the Proton donor in catalysis. Mg(2+) contacts are provided by Asp-191, Glu-216, and Asp-241. The active-site Proton acceptor is Lys-265.

The protein belongs to the mandelate racemase/muconate lactonizing enzyme family. MenC type 2 subfamily. In terms of assembly, homotetramer. A divalent metal cation serves as cofactor.

It carries out the reaction (1R,6R)-6-hydroxy-2-succinyl-cyclohexa-2,4-diene-1-carboxylate = 2-succinylbenzoate + H2O. It catalyses the reaction N-acetyl-D-methionine = N-acetyl-L-methionine. The protein operates within quinol/quinone metabolism; 1,4-dihydroxy-2-naphthoate biosynthesis; 1,4-dihydroxy-2-naphthoate from chorismate: step 4/7. It functions in the pathway quinol/quinone metabolism; menaquinone biosynthesis. Its function is as follows. Converts 2-succinyl-6-hydroxy-2,4-cyclohexadiene-1-carboxylate (SHCHC) to 2-succinylbenzoate (OSB). Also acts as a N-succinylamino acid racemase (NSAR) that catalyzes the racemization of N-succinyl-D/L-phenylalanine. Can catalyze the racemization of a broad range of N-acylamino acids, including N-acetyl-D-methionine, N-formyl-D/L-methionine, N-formyl-D/L-norleucine, N-formyl-D/L-aminobutyric acid, N-formyl-D/L-norvaline, N-formyl-D/L-homophenylalanine, N-carbamoyl-D-methionine and N-carbamoyl-D-norleucine. May be a bifunctional enzyme involved in menaquinone biosynthesis and in an irreversible pathway for the conversion of D- to L-amino acids, thereby facilitating the survival and/or growth of the organism. This is o-succinylbenzoate synthase from Geobacillus stearothermophilus (Bacillus stearothermophilus).